A 341-amino-acid polypeptide reads, in one-letter code: S-adenosylmethionine:tRNA ribosyltransferase-isomerase (341 aa).

Belongs to the QueA family. As to quaternary structure, monomer.

The protein localises to the cytoplasm. It catalyses the reaction 7-aminomethyl-7-carbaguanosine(34) in tRNA + S-adenosyl-L-methionine = epoxyqueuosine(34) in tRNA + adenine + L-methionine + 2 H(+). Its pathway is tRNA modification; tRNA-queuosine biosynthesis. In terms of biological role, transfers and isomerizes the ribose moiety from AdoMet to the 7-aminomethyl group of 7-deazaguanine (preQ1-tRNA) to give epoxyqueuosine (oQ-tRNA). The protein is S-adenosylmethionine:tRNA ribosyltransferase-isomerase of Staphylococcus saprophyticus subsp. saprophyticus (strain ATCC 15305 / DSM 20229 / NCIMB 8711 / NCTC 7292 / S-41).